A 190-amino-acid chain; its full sequence is Pyridoxal 5'-phosphate synthase subunit PdxT (190 aa).

Residue 46–48 (GES) coordinates L-glutamine. The active-site Nucleophile is the Cys-78. L-glutamine contacts are provided by residues Arg-105 and 133–134 (IR). Active-site charge relay system residues include His-169 and Glu-171.

It belongs to the glutaminase PdxT/SNO family. In terms of assembly, in the presence of PdxS, forms a dodecamer of heterodimers. Only shows activity in the heterodimer.

The enzyme catalyses aldehydo-D-ribose 5-phosphate + D-glyceraldehyde 3-phosphate + L-glutamine = pyridoxal 5'-phosphate + L-glutamate + phosphate + 3 H2O + H(+). The catalysed reaction is L-glutamine + H2O = L-glutamate + NH4(+). Its pathway is cofactor biosynthesis; pyridoxal 5'-phosphate biosynthesis. Its function is as follows. Catalyzes the hydrolysis of glutamine to glutamate and ammonia as part of the biosynthesis of pyridoxal 5'-phosphate. The resulting ammonia molecule is channeled to the active site of PdxS. In Niallia circulans (Bacillus circulans), this protein is Pyridoxal 5'-phosphate synthase subunit PdxT.